The sequence spans 158 residues: SsrA-binding protein (158 aa).

Residues 132 to 158 (KKTHDKRETEKKRDWNREKARLMRDKG) form a disordered region. A compositionally biased stretch (basic and acidic residues) spans 136-158 (DKRETEKKRDWNREKARLMRDKG).

Belongs to the SmpB family.

It localises to the cytoplasm. Required for rescue of stalled ribosomes mediated by trans-translation. Binds to transfer-messenger RNA (tmRNA), required for stable association of tmRNA with ribosomes. tmRNA and SmpB together mimic tRNA shape, replacing the anticodon stem-loop with SmpB. tmRNA is encoded by the ssrA gene; the 2 termini fold to resemble tRNA(Ala) and it encodes a 'tag peptide', a short internal open reading frame. During trans-translation Ala-aminoacylated tmRNA acts like a tRNA, entering the A-site of stalled ribosomes, displacing the stalled mRNA. The ribosome then switches to translate the ORF on the tmRNA; the nascent peptide is terminated with the 'tag peptide' encoded by the tmRNA and targeted for degradation. The ribosome is freed to recommence translation, which seems to be the essential function of trans-translation. In Brucella anthropi (strain ATCC 49188 / DSM 6882 / CCUG 24695 / JCM 21032 / LMG 3331 / NBRC 15819 / NCTC 12168 / Alc 37) (Ochrobactrum anthropi), this protein is SsrA-binding protein.